We begin with the raw amino-acid sequence, 62 residues long: uncharacterized protein (62 aa).

This is an uncharacterized protein from Bacillus subtilis (strain 168).